Consider the following 482-residue polypeptide: Putative L-cysteine desulfhydrase 1 (482 aa).

Positions 1 to 10 (MASIPPDDDA) are enriched in acidic residues. Residues 1–45 (MASIPPDDDAAAAAAAGAAENGYGNGKGNGNGPAPRPPPAKRPRS) form a disordered region. Positions 11–22 (AAAAAAGAAENG) are enriched in low complexity. K276 carries the N6-(pyridoxal phosphate)lysine modification.

It belongs to the class-V pyridoxal-phosphate-dependent aminotransferase family. Pyridoxal 5'-phosphate is required as a cofactor.

The enzyme catalyses L-cysteine + H2O = hydrogen sulfide + pyruvate + NH4(+) + H(+). Its function is as follows. Catalyzes the production of hydrogen sulfide (H2S) from cysteine. In Oryza sativa subsp. japonica (Rice), this protein is Putative L-cysteine desulfhydrase 1.